A 515-amino-acid chain; its full sequence is Anterior pharynx in excess protein 1 (515 aa).

The signal sequence occupies residues 1–26 (MTNFSSLLTTIFLCIISSATGSGTIE). Over 27–392 (LLISSPQTVL…QASDELQLRL (366 aa)) the chain is Extracellular. An N-linked (GlcNAc...) asparagine glycan is attached at N123. The 43-residue stretch at 130–172 (NLCSSNYHGKRCNRYCIANAKLHWECSTHGVRRCSAGWSGEDC) folds into the DSL domain. Cystine bridges form between C132/C141, C145/C155, C163/C172, C177/C187, C181/C193, C195/C204, C213/C218, C228/C237, C244/C256, C250/C268, C270/C279, C288/C300, C294/C310, and C312/C321. EGF-like domains lie at 173-205 (SNPI…TRCE), 203-238 (RCEQ…DRCD), 240-280 (DIKI…SQCK), and 284-322 (SKVR…KFCE). N200 carries N-linked (GlcNAc...) asparagine glycosylation. The region spanning 325 to 349 (NHGDCSAMRCSAGETCQISGDFAIC) is the EGF-like 5; incomplete domain. Residues 393–413 (IAAICVLFSVCVIGLALVSFF) form a helical membrane-spanning segment. Topologically, residues 414-515 (FYMHSFSKWK…AADDESSFRV (102 aa)) are cytoplasmic. Disordered regions lie at residues 427–452 (SQQA…SGTG) and 466–494 (RGNA…PPAY). Over residues 431-452 (GGSTILPTTTSIPMSTTSSGTG) the composition is skewed to low complexity.

It is found in the cell membrane. The protein localises to the nucleus. The protein resides in the cytoplasm. Functionally, probable ligand for lin-12/Notch and glp-1/Notch receptors and involved in the mediation of Notch signaling. Involved in the lin-12/Notch pathway signaling of cell fate in vulval precursor cells (VPCs), acting redundantly with dsl-1 and lag-2. Contributes to the establishment of the dorsal-ventral axis in early embryos. Involved in the specification of the blastomere cell ABp fate, probably acting as a signal from the P2 blastomere to the glp-1/Notch receptor on ABp and ABa. Probably acts as a signal, from the secondary vulval epithelial cells and the vulval muscle type 1 (vm1) cells, to activate the lin-12/Notch pathway in type 2 vulval muscle (vm2) cells, contributing to formation of the postsynaptic muscle plasma membrane extensions, known as muscle arms. Required for oocyte growth control, acting redundantly with lag-2, perhaps signaling via the glp-1/Notch pathway. Plays a somatic role in ovulation during adulthood, perhaps via lin-12/Notch signaling. Involved in establishing left-right asymmetry during intestinal organogenesis. The chain is Anterior pharynx in excess protein 1 (apx-1) from Caenorhabditis elegans.